Reading from the N-terminus, the 262-residue chain is Indole-3-glycerol phosphate synthase (262 aa).

It belongs to the TrpC family.

The enzyme catalyses 1-(2-carboxyphenylamino)-1-deoxy-D-ribulose 5-phosphate + H(+) = (1S,2R)-1-C-(indol-3-yl)glycerol 3-phosphate + CO2 + H2O. It functions in the pathway amino-acid biosynthesis; L-tryptophan biosynthesis; L-tryptophan from chorismate: step 4/5. The sequence is that of Indole-3-glycerol phosphate synthase from Clostridium kluyveri (strain NBRC 12016).